Reading from the N-terminus, the 168-residue chain is Small ribosomal subunit protein uS5 (168 aa).

The 64-residue stretch at 11–74 (YSEKVVKIDR…EAAKKHLVKI (64 aa)) folds into the S5 DRBM domain.

The protein belongs to the universal ribosomal protein uS5 family. In terms of assembly, part of the 30S ribosomal subunit. Contacts proteins S4 and S8.

With S4 and S12 plays an important role in translational accuracy. In terms of biological role, located at the back of the 30S subunit body where it stabilizes the conformation of the head with respect to the body. The chain is Small ribosomal subunit protein uS5 from Leptospira borgpetersenii serovar Hardjo-bovis (strain JB197).